The chain runs to 341 residues: Trace amine-associated receptor 13c (341 aa).

The Extracellular segment spans residues 1–34 (MDLSSQEYDPSQFCFPAVNNSCLKGTHHVSTQTV). N-linked (GlcNAc...) asparagine glycosylation occurs at N19. Disulfide bonds link C22–C186 and C105–C186. A helical membrane pass occupies residues 35-55 (VYLILASAMTVTVLGNSVVII). Topologically, residues 56–68 (SIAHFKQLQTPTN) are cytoplasmic. The helical transmembrane segment at 69 to 89 (ILVMSLALADLLLGLVVMPFS) threads the bilayer. Residues 90–105 (MIRSVDGCWYYGETFC) lie on the Extracellular side of the membrane. The chain crosses the membrane as a helical span at residues 106–126 (LLHTGFDLFLTSVSIFHLIFI). The Cytoplasmic segment spans residues 127–147 (AVDRHQAVCFPLQYPTRITIP). Residues 148–168 (VAWVMVMISWSMAAFYSYGVV) form a helical membrane-spanning segment. At 169 to 195 (YSKANLEGLEEYIASVYCMGGCTLYFN) the chain is on the extracellular side. Residues 196–219 (ALWSVLDTLLTFFLPCSVMVGLYA) form a helical membrane-spanning segment. At 220–257 (RIFVVAKKHIKSITEANQNENENVFKNPRRSERKAAKT) the chain is on the cytoplasmic side. The helical transmembrane segment at 258-278 (LGIVVGAFILCWLPFFINSLV) threads the bilayer. Residues 279–292 (DPYINFSTPYALFD) lie on the Extracellular side of the membrane. N283 carries N-linked (GlcNAc...) asparagine glycosylation. The helical transmembrane segment at 293–313 (AFGWLGYTNSTLNPIIYGLFY) threads the bilayer. Topologically, residues 314–341 (PWFRKTLSLIVTLRIFEPNSSDINLFTV) are cytoplasmic.

Belongs to the G-protein coupled receptor 1 family. Expressed in olfactory epithelium (at protein level). Detected in a sparse population of olfactory sensory neurons.

Its subcellular location is the cell membrane. In terms of biological role, olfactory receptor for medium length odd-chained diamines including cadaverine which is generated by bacterial decarboxylation of the basic amino acid lysine and contributes to the odor of decomposing tissue. Mediates pronounced innate aversion behavior to cadaverine. The sequence is that of Trace amine-associated receptor 13c from Danio rerio (Zebrafish).